Reading from the N-terminus, the 740-residue chain is MERPPGLRPGAGGPWEMRERLGTGGFGNVCLYQHRELDLKIAIKSCRLELSTKNRERWCHEIQIMKKLNHANVVKACDVPEELNFLINDVPLLAMEYCSGGDLRKLLNKPENCCGLKESQILSLLSDIGSGIRYLHENKIIHRDLKPENIVLQDVGGKIMHKIIDLGYAKDVDQGSLCTSFVGTLQYLAPELFENKPYTATVDYWSFGTMVFECIAGYRPFLHHLQPFTWHEKIKKKDPKCIFACEEMTGEVRFSSHLPQPNSLCSLIVEPMENWLQLMLNWDPQQRGGPVDLTLKQPRCFVLMDHILNLKIVHILNMTSAKIISFLLPPDESLHSLQSRIERETGINTGSQELLSEMGISLDPRKPASQCVLDGVRGCDSYMVYLFDKSKTVYEGPFASRSLSDCVNYIVQDSKIQLPIIQLRKVWAEAVHYVSGLKEDYSRLFQGQRAAMLSLLRYNTNLTKMKNTLISASQQLKAKLEFFHKSIQLDLERYSEQMTYGISSEKMLKAWKEMEEKAIHYAEVGVIGYLEDQIMSLHTEIMELQKSPYGRRQGDLMESLEQRAIDLYKQLKHRPSDHSYSDSTEMVKIIVHTVQSQDRVLKELFGHLSKLLGCKQKIIDLLPKVEMALSNIKEADSTVMFMQGKRQKEIWHLLKIACTQSSARSLVGSSLEGVTPQLPPTSAEREHPLSCVVTPQDGETLAQMIEENLNCLGHLSTIIHEANEKQGNNMMSLDWSWLTE.

The Protein kinase domain occupies 15–302 (WEMRERLGTG…LTLKQPRCFV (288 aa)). ATP contacts are provided by residues 21–29 (LGTGGFGNV) and Lys44. Position 23 is a phosphothreonine; by PKB/AKT1 (Thr23). The Proton acceptor role is filled by Asp144. A Phosphoserine; by MAP3K14 modification is found at Ser176. Ser180 is modified (phosphoserine). Residues 455 to 476 (LLRYNTNLTKMKNTLISASQQL) are leucine-zipper. The NEMO-binding stretch occupies residues 733 to 738 (LDWSWL).

It belongs to the protein kinase superfamily. Ser/Thr protein kinase family. I-kappa-B kinase subfamily. As to quaternary structure, component of the I-kappa-B-kinase (IKK) core complex consisting of CHUK, IKBKB and IKBKG; probably four alpha/CHUK-beta/IKBKB dimers are associated with four gamma/IKBKG subunits. The IKK core complex seems to associate with regulatory or adapter proteins to form a IKK-signalosome holo-complex. The IKK complex associates with TERF2IP/RAP1, leading to promote IKK-mediated phosphorylation of RELA/p65. Part of a complex composed of NCOA2, NCOA3, CHUK/IKKA, IKBKB, IKBKG and CREBBP. Part of a 70-90 kDa complex at least consisting of CHUK/IKKA, IKBKB, NFKBIA, RELA, ELP1 and MAP3K14. Directly interacts with TRPC4AP. May interact with TRAF2. Interacts with NALP2. May interact with MAVS/IPS1. Interacts with ARRB1 and ARRB2. Interacts with NLRC5; prevents CHUK phosphorylation and kinase activity. Interacts with PIAS1; this interaction induces PIAS1 phosphorylation. Interacts with ZNF268 isoform 2; the interaction is further increased in a TNF-alpha-dependent manner. Interacts with IFIT5; the interaction synergizes the recruitment of IKK to MAP3K7 and enhances IKK phosphorylation. Interacts with LRRC14. Directly interacts with DDX3X after the physiological activation of the TLR7 and TLR8 pathways; this interaction enhances CHUK autophosphorylation. Post-translationally, ubiquitinated by TRIM56 via 'Lys-63'-linked ubiquitination, promoting activation of CHUK/IKKA. In terms of processing, phosphorylated by MAP3K14/NIK, AKT and to a lesser extent by MEKK1, and dephosphorylated by PP2A. Autophosphorylated.

It localises to the cytoplasm. It is found in the nucleus. It catalyses the reaction L-seryl-[I-kappa-B protein] + ATP = O-phospho-L-seryl-[I-kappa-B protein] + ADP + H(+). With respect to regulation, activated when phosphorylated and inactivated when dephosphorylated. Serine kinase that plays an essential role in the NF-kappa-B signaling pathway which is activated by multiple stimuli such as inflammatory cytokines, bacterial or viral products, DNA damages or other cellular stresses. Acts as a part of the canonical IKK complex in the conventional pathway of NF-kappa-B activation and phosphorylates inhibitors of NF-kappa-B on serine residues. These modifications allow polyubiquitination of the inhibitors and subsequent degradation by the proteasome. In turn, free NF-kappa-B is translocated into the nucleus and activates the transcription of hundreds of genes involved in immune response, growth control, or protection against apoptosis. Negatively regulates the pathway by phosphorylating the scaffold protein TAXBP1 and thus promoting the assembly of the A20/TNFAIP3 ubiquitin-editing complex (composed of A20/TNFAIP3, TAX1BP1, and the E3 ligases ITCH and RNF11). Therefore, CHUK plays a key role in the negative feedback of NF-kappa-B canonical signaling to limit inflammatory gene activation. As part of the non-canonical pathway of NF-kappa-B activation, the MAP3K14-activated CHUK/IKKA homodimer phosphorylates NFKB2/p100 associated with RelB, inducing its proteolytic processing to NFKB2/p52 and the formation of NF-kappa-B RelB-p52 complexes. In turn, these complexes regulate genes encoding molecules involved in B-cell survival and lymphoid organogenesis. Also participates in the negative feedback of the non-canonical NF-kappa-B signaling pathway by phosphorylating and destabilizing MAP3K14/NIK. Within the nucleus, phosphorylates CREBBP and consequently increases both its transcriptional and histone acetyltransferase activities. Modulates chromatin accessibility at NF-kappa-B-responsive promoters by phosphorylating histones H3 at 'Ser-10' that are subsequently acetylated at 'Lys-14' by CREBBP. Additionally, phosphorylates the CREBBP-interacting protein NCOA3. Also phosphorylates FOXO3 and may regulate this pro-apoptotic transcription factor. Interacts with SASH1. Phosphorylates RIPK1 at 'Ser-25' which represses its kinase activity and consequently prevents TNF-mediated RIPK1-dependent cell death. Phosphorylates AMBRA1 following mitophagy induction, promoting AMBRA1 interaction with ATG8 family proteins and its mitophagic activity. The chain is Inhibitor of nuclear factor kappa-B kinase subunit alpha (CHUK) from Bos taurus (Bovine).